Reading from the N-terminus, the 116-residue chain is Putative pterin-4-alpha-carbinolamine dehydratase (116 aa).

This sequence belongs to the pterin-4-alpha-carbinolamine dehydratase family.

It catalyses the reaction (4aS,6R)-4a-hydroxy-L-erythro-5,6,7,8-tetrahydrobiopterin = (6R)-L-erythro-6,7-dihydrobiopterin + H2O. The chain is Putative pterin-4-alpha-carbinolamine dehydratase from Stenotrophomonas maltophilia (strain R551-3).